We begin with the raw amino-acid sequence, 160 residues long: Transcription antitermination protein NusB (160 aa).

The protein belongs to the NusB family.

Involved in transcription antitermination. Required for transcription of ribosomal RNA (rRNA) genes. Binds specifically to the boxA antiterminator sequence of the ribosomal RNA (rrn) operons. The chain is Transcription antitermination protein NusB from Rhizobium leguminosarum bv. trifolii (strain WSM2304).